The chain runs to 445 residues: Tubulin beta-9 chain (445 aa).

Positions 11, 69, 138, 142, 143, 144, 204, and 226 each coordinate GTP. A Mg(2+)-binding site is contributed by Glu69. The segment at 423-445 is disordered; the sequence is QQYQDATADDEEYEEEEEYEAEA. A compositionally biased stretch (acidic residues) spans 429 to 445; the sequence is TADDEEYEEEEEYEAEA.

The protein belongs to the tubulin family. In terms of assembly, dimer of alpha and beta chains. A typical microtubule is a hollow water-filled tube with an outer diameter of 25 nm and an inner diameter of 15 nM. Alpha-beta heterodimers associate head-to-tail to form protofilaments running lengthwise along the microtubule wall with the beta-tubulin subunit facing the microtubule plus end conferring a structural polarity. Microtubules usually have 13 protofilaments but different protofilament numbers can be found in some organisms and specialized cells. Mg(2+) serves as cofactor.

It is found in the cytoplasm. Its subcellular location is the cytoskeleton. Tubulin is the major constituent of microtubules, a cylinder consisting of laterally associated linear protofilaments composed of alpha- and beta-tubulin heterodimers. Microtubules grow by the addition of GTP-tubulin dimers to the microtubule end, where a stabilizing cap forms. Below the cap, tubulin dimers are in GDP-bound state, owing to GTPase activity of alpha-tubulin. The chain is Tubulin beta-9 chain from Gossypium hirsutum (Upland cotton).